The following is a 295-amino-acid chain: Putative aquaporin-12B (295 aa).

Residues 1 to 22 lie on the Cytoplasmic side of the membrane; it reads MAGLNVSLSFFFATFTLCEAAR. A helical transmembrane segment spans residues 23 to 41; it reads RASKALLPVGAYEVFAREA. Residues 42 to 55 are Extracellular-facing; sequence MRTLVELGPWAGDF. Residues 56 to 74 form a helical membrane-spanning segment; the sequence is GPDLLLTLLFLLFLAHGVT. The Cytoplasmic segment spans residues 75-76; the sequence is LD. The discontinuously helical intramembrane region spans 77-114; the sequence is GASANPTVSLQEFLMAEESLPGTLLKLAAQGLGMQAAC. An NPA 1 motif is present at residues 81–83; the sequence is NPT. The Cytoplasmic portion of the chain corresponds to 115–120; the sequence is TLTRLC. The chain crosses the membrane as a helical span at residues 121 to 142; that stretch reads WAWELSDLHLLQSLMAQSCSSA. The Extracellular segment spans residues 143–145; the sequence is LRT. Residues 146 to 166 form a helical membrane-spanning segment; the sequence is SVPHGALVEAACAFCFHLTLL. Residues 167 to 174 are Cytoplasmic-facing; the sequence is HLRHSPPA. The helical transmembrane segment at 175 to 191 threads the bilayer; it reads YSGPAVALLVTVTAYTA. At 192 to 194 the chain is on the extracellular side; that stretch reads GPF. The segment at residues 195–206 is an intramembrane region (discontinuously helical); it reads TSAFFNPALAAS. Residues 200 to 202 carry the NPA 2 motif; that stretch reads NPA. Topologically, residues 207-223 are extracellular; sequence VTFACSGHTLLEYVQVY. The helical transmembrane segment at 224-244 threads the bilayer; the sequence is WLGPLTGMVLAVLLHQGRLPH. Residues 245-295 lie on the Cytoplasmic side of the membrane; sequence LFQRNLFYGQKNKYRAPRGKPAPASGDTQTPAKGSSVREPGRSGVEGPHSS. The tract at residues 257–295 is disordered; sequence KYRAPRGKPAPASGDTQTPAKGSSVREPGRSGVEGPHSS.

It belongs to the MIP/aquaporin (TC 1.A.8) family. AQP11/AQP12 subfamily. Homotetramer; each monomer provides an independent water pore.

The protein localises to the membrane. It carries out the reaction H2O(in) = H2O(out). Functionally, putative aquaporin. Could form homotetrameric transmembrane channels, with each monomer independently mediating water transport across the plasma membrane along its osmotic gradient. This Homo sapiens (Human) protein is Putative aquaporin-12B.